Here is a 256-residue protein sequence, read N- to C-terminus: UPF0246 protein SPO0106 (256 aa).

It belongs to the UPF0246 family.

The protein is UPF0246 protein SPO0106 of Ruegeria pomeroyi (strain ATCC 700808 / DSM 15171 / DSS-3) (Silicibacter pomeroyi).